Reading from the N-terminus, the 271-residue chain is Cell surface glycoprotein CD200 receptor 2 (271 aa).

The signal sequence occupies residues 1–23; it reads MSAPRLLISIIIMVSASSSSCMG. Topologically, residues 24–239 are extracellular; sequence GKQMTQNYST…TSGSPALSLL (216 aa). 6 N-linked (GlcNAc...) asparagine glycosylation sites follow: Asn-30, Asn-39, Asn-86, Asn-92, Asn-189, and Asn-217. Positions 46 to 132 constitute an Ig-like V-type domain; sequence MDINAVLCCP…YRGIVVTPDG (87 aa). Residues 133–221 form the Ig-like C2-type domain; that stretch reads NFHRGYHLQV…SHLTGNKSLS (89 aa). A disulfide bridge links Cys-160 with Cys-209. Residues 240 to 260 form a helical membrane-spanning segment; that stretch reads IILYVKLSLFVVILVTTGFVF. At 261 to 271 the chain is on the cytoplasmic side; the sequence is FQRINHVRKVL.

The protein belongs to the CD200R family.

It localises to the membrane. Functionally, may be a receptor for the CD200/OX2 cell surface glycoprotein. The chain is Cell surface glycoprotein CD200 receptor 2 (CD200R1L) from Homo sapiens (Human).